Reading from the N-terminus, the 174-residue chain is Early E1A protein (174 aa).

Residues 40–48 (PSLHDLFDL) are interaction with RB1 in competition with E2F1. The LXCXE motif, interaction with host RB1 signature appears at 106–110 (LLCLE). Residues 145–163 (CLRCAYYQEQGENSICGLC) fold into a zinc finger.

Belongs to the adenoviridae E1A protein family. Interacts with host UBE2I; this interaction interferes with polySUMOylation. Interacts with host RB1; this interaction induces the aberrant dissociation of RB1-E2F1 complex thereby disrupting the activity of RB1 and activating E2F1-regulated genes. Interacts with host ATF7; the interaction enhances ATF7-mediated viral transactivation activity which requires the zinc binding domains of both proteins. Isoform early E1A 32 kDa protein and isoform early E1A 26 kDa protein interact (via N-terminus) with CUL1 and E3 ubiquitin ligase RBX1; these interactions inhibit RBX1-CUL1-dependent elongation reaction of ubiquitin chains and attenuate ubiquitination of SCF(FBXW7) target proteins. Interacts (via PXLXP motif) with host ZMYND11/BS69 (via MYND-type zinc finger); this interaction inhibits E1A mediated transactivation. Interacts with host EP300; this interaction stimulates the acetylation of RB1 by recruiting EP300 and RB1 into a multimeric-protein complex. Interacts with host CTBP1 and CTBP2; this interaction seems to potentiate viral replication. Interacts with host DCAF7. Interacts with host DYRK1A. Interacts with host KPNA4; this interaction allows E1A import into the host nucleus. Interacts with host EP400; this interaction stabilizes MYC. Interacts with host TBP protein; this interaction probably disrupts the TBP-TATA complex.

The protein localises to the host nucleus. Its function is as follows. Plays a role in viral genome replication by driving entry of quiescent cells into the cell cycle. Stimulation of progression from G1 to S phase allows the virus to efficiently use the cellular DNA replicating machinery to achieve viral genome replication. E1A protein has both transforming and trans-activating activities. Induces the disassembly of the E2F1 transcription factor from RB1 by direct competition for the same binding site on RB1, with subsequent transcriptional activation of E2F1-regulated S-phase genes and of the E2 region of the adenoviral genome. Release of E2F1 leads to the ARF-mediated inhibition of MDM2 and causes TP53/p53 to accumulate because it is not targeted for degradation by MDM2-mediated ubiquitination anymore. This increase in TP53, in turn, would arrest the cell proliferation and direct its death but this effect is counteracted by the viral protein E1B-55K. Inactivation of the ability of RB1 to arrest the cell cycle is critical for cellular transformation, uncontrolled cellular growth and proliferation induced by viral infection. Interaction with RBX1 and CUL1 inhibits ubiquitination of the proteins targeted by SCF(FBXW7) ubiquitin ligase complex, and may be linked to unregulated host cell proliferation. The tumorigenesis-restraining activity of E1A may be related to the disruption of the host CtBP-CtIP complex through the CtBP binding motif. The protein is Early E1A protein of Canine adenovirus serotype 1 (strain RI261) (CAdV-1).